A 378-amino-acid chain; its full sequence is D-galactarolactone cycloisomerase (378 aa).

Mg(2+)-binding residues include Asp194, Glu220, and Glu246. The active-site Proton acceptor is the His296.

The protein belongs to the mandelate racemase/muconate lactonizing enzyme family. As to quaternary structure, homooctamer. Requires Mg(2+) as cofactor.

It catalyses the reaction D-glucaro-1,4-lactone = 5-dehydro-4-deoxy-D-glucarate + H(+). It carries out the reaction D-galactaro-1,4-lactone = 5-dehydro-4-deoxy-D-glucarate + H(+). It participates in carbohydrate acid metabolism; D-galacturonate degradation via prokaryotic oxidative pathway. In terms of biological role, catalyzes the ring opening of D-galactaro-1,4-lactone to yield 5-keto-4-deoxy-D-glucarate (KDG) via a beta-elimination reaction. This is a step in the oxidative degradation pathway of D-galacturonate, which allows A.tumefaciens to utilize D-galacturonate as a sole carbon source. To a lesser extent, can also use D-glucaro-1,4-lactone as substrate to produce KDG, but cannot use D-galactaro-1,5-lactone, D-glucaro-6,3-lactone and linear D-glucarate. The protein is D-galactarolactone cycloisomerase (gci) of Agrobacterium fabrum (strain C58 / ATCC 33970) (Agrobacterium tumefaciens (strain C58)).